We begin with the raw amino-acid sequence, 43 residues long: Defensin (43 aa).

3 disulfides stabilise this stretch: Cys-3/Cys-34, Cys-20/Cys-39, and Cys-24/Cys-41.

Its subcellular location is the secreted. Its function is as follows. Antibacterial peptide. Affects Gram-negative bacteria including methicillin-resistant Staphylococcus aureus. The chain is Defensin from Trypoxylus dichotomus (Japanese rhinoceros beetle).